We begin with the raw amino-acid sequence, 345 residues long: Proto-oncogene serine/threonine-protein kinase mos (345 aa).

The 282-residue stretch at 63–344 folds into the Protein kinase domain; the sequence is VCLLQRLGAG…LDLRALQAEL (282 aa). Residues 69-77 and Lys-90 contribute to the ATP site; that span reads LGAGGFGSV. Asp-202 acts as the Proton acceptor in catalysis.

This sequence belongs to the protein kinase superfamily. Ser/Thr protein kinase family. As to quaternary structure, interacts with MAP2K1/MEK1. Restricted to gonadal tissues.

The protein resides in the cytoplasm. It catalyses the reaction L-seryl-[protein] + ATP = O-phospho-L-seryl-[protein] + ADP + H(+). The enzyme catalyses L-threonyl-[protein] + ATP = O-phospho-L-threonyl-[protein] + ADP + H(+). Functionally, serine/threonine kinase involved in the regulation of MAPK signaling. Is an activator of the ERK1/2 signaling cascade playing an essential role in the stimulation of oocyte maturation. This Sus scrofa (Pig) protein is Proto-oncogene serine/threonine-protein kinase mos.